The primary structure comprises 935 residues: MITHGFYARTRHKHKLKKTFIMLSAGLGLFFYVNQNSFANGENYFKLSSDSKLLTQNVAQDRLFYTLKTGETVSSISKSQGISLSVIWSLNKHLYSSESEMLKAAPGQQIILPLKKLSVEYGALPVLGSAPVVAAGGVAGHTNKMTKMSPDATQSNMTDDRALNYTAQQAASLGSQLQSRSLHGDYAKDTALGIAGNQASSQLQAWLQHYGTAEVNLQSGNNFDGSSLDFLLPFYDSEKMLAFGQVGARYIDSRFTANLGAGQRFFLPENMLGYNVFIDQDFSGDNTRLGIGGEYWRDYFKSSVNGYFRMSGWHESYNKKDYDERPANGFDIRFNGYLPSYPALGAKLMYEQYYGDNVALFNSDKLQSNPGAATVGVNYTPIPLVTMGIDYRHGTGYENDLLYSMQFRYQFDKPWSPQIEPQYVNELRTLSGSRYDLVQRNNNIILEYKKQDILSLNIPHDINGTEHSTQKIQLIVKSKYGLDRIVWDDSALRSQGGQIQHSGSQSAQDYQAILPAYVQGGSNIYKVTARAYDRNGNSSNNVQLTITVLSNGQVVDQVGVTDFTADKTSAKADGTEAITYTATVKKNGVTQANVPVSFNIVSGTATLGANSATTDANGKATVTLKSSTPGQVVVSAKTAEMTSALNASAVIFVEQTKASITEIKADKTTAVANGNDAVTYTVKVMKEGQPVHGHSVAFTTNFGMFNGKSQTQNATTGSDGRATITLTSSSAGKATVSATVSGGNDVKAPEVTFFDGLKIDNKVDILGKNVTGDLPNIWLQYGQFKLKVSGGNGTYSWHSENTNIATVDESGKVTLKGKGTAVINVTSGDKQTVSYTIKAPNYMIRVGNKASYANAMSFCGNLLPSSQTVLSNVYNSWGPANGYDHYRSMQSITAWITQTEADKISGVSTTYDLITQNPHKDVSLNAPNVYAVCVE.

An N-terminal signal peptide occupies residues 1–41 (MITHGFYARTRHKHKLKKTFIMLSAGLGLFFYVNQNSFANG). A peptidoglycan-binding region spans residues 40 to 153 (NGENYFKLSS…KMTKMSPDAT (114 aa)). Positions 40–153 (NGENYFKLSS…KMTKMSPDAT (114 aa)) are sufficient for homodimerization. Positions 40 to 212 (NGENYFKLSS…LQAWLQHYGT (173 aa)) are required for periplasmic localization. The LysM domain maps to 63-112 (LFYTLKTGETVSSISKSQGISLSVIWSLNKHLYSSESEMLKAAPGQQIIL). Residues 210-411 (YGTAEVNLQS…LYSMQFRYQF (202 aa)) form an inverse autotransporter region. Positions 402–411 (LYSMQFRYQF) are signature sequence for beta-barrel assembly machinery (BAM), which recognizes the unfolded beta-barrel in the periplasm. 2 Big-1 domains span residues 560 to 653 (VTDF…VIFV) and 660 to 754 (ITEI…VTFF). The region spanning 790–834 (GGNGTYSWHSENTNIATVDESGKVTLKGKGTAVINVTSGDKQTVS) is the BIG2 domain. A disulfide bridge connects residues C859 and C933.

It belongs to the intimin/invasin family. In terms of assembly, homodimer. Interacts with Tir.

The protein localises to the cell outer membrane. Functionally, an inverse autotransporter. Adhesin, which mediates attachment to the human intestine epithelial cells. Necessary for the production of attaching and effacing lesions on infected human tissue culture cells. Anchored to the outer membrane by binding to peptidoglycan (PGN) via its periplasmic domain, thus helping in receptor interactions during host invasion. PGN-binding may also aid in resisting mechanical and chemical stress during transit of the bacterium through the gastrointestinal tract of the host. The chain is Intimin (eae) from Escherichia coli O111:H-.